We begin with the raw amino-acid sequence, 485 residues long: E3 ubiquitin-protein ligase TRIM68 (485 aa).

An RING-type zinc finger spans residues C16–R61. The segment at L93 to M134 adopts a B box-type zinc-finger fold. Positions 98, 101, 120, and 126 each coordinate Zn(2+). A coiled-coil region spans residues A207 to Q239. Positions L285–L481 constitute a B30.2/SPRY domain.

This sequence belongs to the TRIM/RBCC family. In terms of assembly, interacts with AR/androgen receptor (via ligand-binding domain). Interacts with KAT5/TIP60. Auto-ubiquitinated. In terms of tissue distribution, widely expressed. Expressed at high levels in prostate cancer cell lines. Up-regulation could be restricted to androgen-dependent cells.

It is found in the cytoplasm. The protein resides in the perinuclear region. The protein localises to the nucleus. The catalysed reaction is S-ubiquitinyl-[E2 ubiquitin-conjugating enzyme]-L-cysteine + [acceptor protein]-L-lysine = [E2 ubiquitin-conjugating enzyme]-L-cysteine + N(6)-ubiquitinyl-[acceptor protein]-L-lysine.. It participates in protein modification; protein ubiquitination. Its function is as follows. Functions as a ubiquitin E3 ligase. Acts as a coactivator of androgen receptor (AR) depending on its ubiquitin ligase activity. This is E3 ubiquitin-protein ligase TRIM68 (TRIM68) from Homo sapiens (Human).